The primary structure comprises 127 residues: Dual endothelin-1/VEGF signal peptide receptor (127 aa).

Topologically, residues 1–69 (MSTFYVTAVP…EMKSRWNWGS (69 aa)) are extracellular. The helical transmembrane segment at 70 to 88 (ITCIMCFTCVGSQLSMSSS) threads the bilayer. Residues 89-127 (KASNFSGPLQLYQRGIGHITNPYRRPPAPAWPCSSSGTT) lie on the Cytoplasmic side of the membrane.

As to expression, prominently expressed in brain and heart tissues. Weakly expressed in aorta, adrenal gland, and lung tissues.

It is found in the cell membrane. Functionally, in the Dahl salt-resistant strain, acts as a dual receptor for both endothelin-1 and the signal sequence of vascular endothelial growth factor A and does not act as a receptor for angiotensin-2. Does not bind the VEGFA mature protein. In the Dahl salt-sensitive strain, acts as a dual endothelin-1/angiotensin-2 receptor that is functionally coupled to a calcium-mobilizing transduction system, responding equivalently to both endothelin-1/EDN1 and angiotensin-2 peptides in a highly specific manner. May play a role in angiogenesis with a significant role in cardiovascular and neural development. The protein is Dual endothelin-1/VEGF signal peptide receptor of Rattus norvegicus (Rat).